The chain runs to 786 residues: Ribosome biogenesis protein BOP1 homolog (786 aa).

Residues M1–V11 show a composition bias toward basic residues. The disordered stretch occupies residues M1–I161. Polar residues predominate over residues I17–Q26. Acidic residues-rich tracts occupy residues E44–D53, T60–G72, and S82–K114. Over residues K122 to I135 the composition is skewed to polar residues. Basic and acidic residues predominate over residues P141–Y150. Residues E151–D160 are compositionally biased toward acidic residues. 7 WD repeats span residues G447–E488, N490–V528, T572–P614, K617–K655, T658–Q697, L701–Q740, and R756–T786.

This sequence belongs to the WD repeat BOP1/ERB1 family.

It is found in the nucleus. The protein resides in the nucleolus. Its subcellular location is the nucleoplasm. Its function is as follows. Required for maturation of ribosomal RNAs and formation of the large ribosomal subunit. The chain is Ribosome biogenesis protein BOP1 homolog from Drosophila grimshawi (Hawaiian fruit fly).